Consider the following 316-residue polypeptide: PDZ and LIM domain protein 3 (316 aa).

In terms of domain architecture, PDZ spans 1 to 84 (MPQNVVLPGP…QLCLKIDRAE (84 aa)). S18 and S93 each carry phosphoserine. R164 bears the Omega-N-methylarginine mark. One can recognise an LIM zinc-binding domain in the interval 244–303 (PLCDKCGSGIVGAVVKARDKYRHPECFVCADCNLNLKQKGYFFVEGELYCETHARARTRP).

In terms of assembly, interacts with ACTN2. Forms a heterodimer with PDLIM4 (via LIM domain).

The protein resides in the cytoplasm. The protein localises to the myofibril. It localises to the sarcomere. Its subcellular location is the z line. Functionally, may play a role in the organization of actin filament arrays within muscle cells. The chain is PDZ and LIM domain protein 3 (Pdlim3) from Mus musculus (Mouse).